The primary structure comprises 276 residues: NH(3)-dependent NAD(+) synthetase (276 aa).

43 to 50 (GISGGVDS) is an ATP binding site. Asp49 is a binding site for Mg(2+). Arg146 serves as a coordination point for deamido-NAD(+). Residue Thr166 coordinates ATP. Residue Glu171 participates in Mg(2+) binding. Lys179 and Asp186 together coordinate deamido-NAD(+). Residues Lys195 and Thr217 each contribute to the ATP site. A deamido-NAD(+)-binding site is contributed by 266 to 267 (HK).

It belongs to the NAD synthetase family. As to quaternary structure, homodimer.

The enzyme catalyses deamido-NAD(+) + NH4(+) + ATP = AMP + diphosphate + NAD(+) + H(+). It participates in cofactor biosynthesis; NAD(+) biosynthesis; NAD(+) from deamido-NAD(+) (ammonia route): step 1/1. Its function is as follows. Catalyzes the ATP-dependent amidation of deamido-NAD to form NAD. Uses ammonia as a nitrogen source. This Shewanella frigidimarina (strain NCIMB 400) protein is NH(3)-dependent NAD(+) synthetase.